A 700-amino-acid chain; its full sequence is MYLVSLLSSCCLLVLLGTLPARAAHEDPVEKVIEGFSRGLSNAEREVGKALEGINNGITQAGREVEKIFGELSNMGSQAGKNVEHGLDKVAHDINNGIGHAGKEAEKFAHGVNHAAGQVGKETNKIIHHGVSQGGSEAGKFGQGSHHAFGQGGNVANKLGHETHHAFGQGGNVAHKLGHETHHAFGQGGNVADKLGHGGNVADKLGHGTHHAFGQGGNVADKLGHETHHAFGQGGNVADKLGHGTHHAFGQGGNVADKLGHETHHAFGQGGNVAEKLGHETHHAFGQGGNMADKFGQGAHHAFGQGGNMADKFGQGAHHAFGQGGNMADKFGQGAHHAFGQGGNMADKFGQGAHHAFGQGGNMADKFGQGAHHAFGQGGNMADKFGQGAHHAFGQGRDMAETFDQGAHHAFGQGGREGGRLVQGAGQGLSHAAKEAQQFGHGHGHGYYAAGQTWQEGDKVIHPGVSQAGEEMEQFGQGVRHTIKQAEKEAEKVAHGVQNGVNQAQKEAEKVAHGVQNGVNQAQKEAEKVAHGVQNGVNQAQKEAEKVAHGVQTGVNQAGKETQRVGQGVQTGFNQGQKEAEKVAHGVQTGVNQAGKETQKAGQGVNYAAGQAEKEAEKLGQGVHHAAGQEMNRLQQDVHNGVNQPSKEANQLLNGSHQGQGGYGGQHGGAATTTVVSGASVNKPFINFPALWRSIAATMP.

The signal sequence occupies residues 1 to 23 (MYLVSLLSSCCLLVLLGTLPARA). Disordered stretches follow at residues 133–158 (QGGS…VANK), 183–258 (HAFG…VADK), and 283–391 (HAFG…GAHH). Residues 488 to 546 (KEAEKVAHGVQNGVNQAQKEAEKVAHGVQNGVNQAQKEAEKVAHGVQNGVNQAQKEAEK) adopt a coiled-coil conformation. The span at 641 to 654 (GVNQPSKEANQLLN) shows a compositional bias: polar residues. A disordered region spans residues 641 to 669 (GVNQPSKEANQLLNGSHQGQGGYGGQHGG). A compositionally biased stretch (gly residues) spans 658–668 (QGQGGYGGQHG).

In terms of tissue distribution, detected in epidermis, in suprabasal keratinocytes. Detected in suprabasal layers of embryonic epidermis and in stratified layers of embryonic tongue and palate. Detected in adult stomach.

Its subcellular location is the secreted. The sequence is that of Suprabasin (Sbsn) from Mus musculus (Mouse).